The primary structure comprises 312 residues: Ribosomal RNA small subunit methyltransferase H (312 aa).

The tract at residues methionine 1–threonine 24 is disordered. S-adenosyl-L-methionine is bound by residues alanine 55–histidine 57, aspartate 72, tyrosine 96, aspartate 117, and glutamine 124. A disordered region spans residues glutamate 288–serine 312.

It belongs to the methyltransferase superfamily. RsmH family.

The protein resides in the cytoplasm. The enzyme catalyses cytidine(1402) in 16S rRNA + S-adenosyl-L-methionine = N(4)-methylcytidine(1402) in 16S rRNA + S-adenosyl-L-homocysteine + H(+). Specifically methylates the N4 position of cytidine in position 1402 (C1402) of 16S rRNA. In Deinococcus radiodurans (strain ATCC 13939 / DSM 20539 / JCM 16871 / CCUG 27074 / LMG 4051 / NBRC 15346 / NCIMB 9279 / VKM B-1422 / R1), this protein is Ribosomal RNA small subunit methyltransferase H.